A 387-amino-acid chain; its full sequence is Arginine biosynthesis bifunctional protein ArgJ 2 (387 aa).

Positions 147, 169, 180, 259, 382, and 387 each coordinate substrate. Threonine 180 (nucleophile) is an active-site residue.

This sequence belongs to the ArgJ family. In terms of assembly, heterotetramer of two alpha and two beta chains.

It is found in the cytoplasm. The catalysed reaction is N(2)-acetyl-L-ornithine + L-glutamate = N-acetyl-L-glutamate + L-ornithine. It catalyses the reaction L-glutamate + acetyl-CoA = N-acetyl-L-glutamate + CoA + H(+). Its pathway is amino-acid biosynthesis; L-arginine biosynthesis; L-ornithine and N-acetyl-L-glutamate from L-glutamate and N(2)-acetyl-L-ornithine (cyclic): step 1/1. It functions in the pathway amino-acid biosynthesis; L-arginine biosynthesis; N(2)-acetyl-L-ornithine from L-glutamate: step 1/4. Functionally, catalyzes two activities which are involved in the cyclic version of arginine biosynthesis: the synthesis of N-acetylglutamate from glutamate and acetyl-CoA as the acetyl donor, and of ornithine by transacetylation between N(2)-acetylornithine and glutamate. This chain is Arginine biosynthesis bifunctional protein ArgJ 2, found in Nostoc sp. (strain PCC 7120 / SAG 25.82 / UTEX 2576).